The chain runs to 165 residues: Chorismate pyruvate-lyase (165 aa).

Residues methionine 35, arginine 77, leucine 115, and glutamate 156 each contribute to the substrate site.

This sequence belongs to the UbiC family. As to quaternary structure, monomer.

Its subcellular location is the cytoplasm. It carries out the reaction chorismate = 4-hydroxybenzoate + pyruvate. It functions in the pathway cofactor biosynthesis; ubiquinone biosynthesis. Its function is as follows. Removes the pyruvyl group from chorismate, with concomitant aromatization of the ring, to provide 4-hydroxybenzoate (4HB) for the ubiquinone pathway. This is Chorismate pyruvate-lyase from Salmonella enteritidis PT4 (strain P125109).